Reading from the N-terminus, the 547-residue chain is Cytochrome P450 monooxygenase 128 (547 aa).

Residues 9-25 (IPWAAGATLLAWAAYKI) traverse the membrane as a helical segment. N-linked (GlcNAc...) asparagine glycans are attached at residues Asn-336 and Asn-438. Cys-483 lines the heme pocket.

This sequence belongs to the cytochrome P450 family. It depends on heme as a cofactor.

It is found in the membrane. It participates in secondary metabolite biosynthesis. Its function is as follows. Cytochrome P450 monooxygenase that is able to use 7-ethoxycoumarin and testosterone as substrates for oxidation. The protein is Cytochrome P450 monooxygenase 128 of Postia placenta (strain ATCC 44394 / Madison 698-R) (Brown rot fungus).